Here is a 165-residue protein sequence, read N- to C-terminus: Chaperone protein SicA (165 aa).

It belongs to the LcrH/SycD chaperone family. Dimer or higher-order oligomers.

The protein localises to the cytoplasm. Its function is as follows. Type III secretion-associated chaperone required for SipB and SipC stabilization. Prevents premature association of SipB with SipC, which may lead to their targeting for degradation. Along with InvF, required for transcription activation of sigDE (sopB pipC), sicAsipBCDA, and sopE. This Salmonella dublin protein is Chaperone protein SicA (sicA).